The following is a 435-amino-acid chain: Asparagine--tRNA ligase (435 aa).

It belongs to the class-II aminoacyl-tRNA synthetase family. In terms of assembly, homodimer.

The protein localises to the cytoplasm. It carries out the reaction tRNA(Asn) + L-asparagine + ATP = L-asparaginyl-tRNA(Asn) + AMP + diphosphate + H(+). The sequence is that of Asparagine--tRNA ligase from Leptospira interrogans serogroup Icterohaemorrhagiae serovar copenhageni (strain Fiocruz L1-130).